Here is a 308-residue protein sequence, read N- to C-terminus: D-alanine--D-alanine ligase (308 aa).

Positions 103–302 constitute an ATP-grasp domain; sequence KTVMATAGVP…FDELVQWMVE (200 aa). ATP is bound at residue 130 to 184; the sequence is MAPPYVIKPVADGSSVGVFMVTEAHEHPPQELFRDDWPHGEQLLVEKYVAGKELT. Mg(2+)-binding residues include D252, E269, and N271.

It belongs to the D-alanine--D-alanine ligase family. Requires Mg(2+) as cofactor. Mn(2+) is required as a cofactor.

It is found in the cytoplasm. It catalyses the reaction 2 D-alanine + ATP = D-alanyl-D-alanine + ADP + phosphate + H(+). It participates in cell wall biogenesis; peptidoglycan biosynthesis. In terms of biological role, cell wall formation. This is D-alanine--D-alanine ligase from Rhodopseudomonas palustris (strain BisB18).